Here is a 69-residue protein sequence, read N- to C-terminus: Putative membrane protein insertion efficiency factor (69 aa).

This sequence belongs to the UPF0161 family.

Its subcellular location is the cell membrane. In terms of biological role, could be involved in insertion of integral membrane proteins into the membrane. The polypeptide is Putative membrane protein insertion efficiency factor (Caldanaerobacter subterraneus subsp. tengcongensis (strain DSM 15242 / JCM 11007 / NBRC 100824 / MB4) (Thermoanaerobacter tengcongensis)).